The following is a 390-amino-acid chain: Probable tRNA pseudouridine synthase D (390 aa).

The active-site Nucleophile is Asp-93. Residues 166–353 form the TRUD domain; the sequence is HVLNYFGIQR…YGTRRKLITP (188 aa).

Belongs to the pseudouridine synthase TruD family.

The enzyme catalyses uridine(13) in tRNA = pseudouridine(13) in tRNA. Its function is as follows. Could be responsible for synthesis of pseudouridine from uracil-13 in transfer RNAs. This Methanococcus vannielii (strain ATCC 35089 / DSM 1224 / JCM 13029 / OCM 148 / SB) protein is Probable tRNA pseudouridine synthase D.